We begin with the raw amino-acid sequence, 548 residues long: ETS domain-containing transcription factor ERF (548 aa).

Thr3 and Thr7 each carry phosphothreonine. Ser20 and Ser24 each carry phosphoserine. Residues 27–107 (IQLWHFILEL…KGKRFTYKFN (81 aa)) constitute a DNA-binding region (ETS). Disordered stretches follow at residues 130 to 169 (QSAP…SSSS), 184 to 225 (GSVS…LARL), and 280 to 304 (SPTL…SHFS). Residues Ser185 and Ser190 each carry the phosphoserine modification. The segment covering 289-301 (SGGGGPSGSGGGS) has biased composition (gly residues). Ser327 is subject to Phosphoserine. A disordered region spans residues 342-478 (PQRPDKCPLP…GEAPGASQCM (137 aa)). Residues 348-361 (CPLPPMAPETPPVP) show a composition bias toward pro residues. Composition is skewed to low complexity over residues 362 to 373 (SSASSSSSSSSS) and 394 to 403 (KAVAGADKSG). Phosphoserine is present on residues Ser431 and Ser435. Positions 431-451 (SEGESEEVEVTDISDEDEEDG) are enriched in acidic residues. The residue at position 441 (Thr441) is a Phosphothreonine. Ser444 is subject to Phosphoserine. Residues Lys465, Lys481, and Lys512 each participate in a glycyl lysine isopeptide (Lys-Gly) (interchain with G-Cter in SUMO2) cross-link. The tract at residues 492–548 (CRLEGGGGPAGGFEDEGEDKKVRGEGPGEAGGPLTPRRVSSDLQHATAQLSLEHRDS) is disordered. Residue Thr526 is modified to Phosphothreonine; by MAPK1. Phosphoserine is present on residues Ser531, Ser532, and Ser548. The segment covering 532–541 (SDLQHATAQL) has biased composition (polar residues).

The protein belongs to the ETS family. In terms of processing, phosphorylated by multiple kinases including MAPK1/ERK2 at THR-526. Phosphorylation regulates the activity of ERF. As to expression, highest levels in testis, ovary, pancreas, and heart.

The protein resides in the nucleus. Its function is as follows. Potent transcriptional repressor that binds to the H1 element of the Ets2 promoter. May regulate other genes involved in cellular proliferation. Required for extraembryonic ectoderm differentiation, ectoplacental cone cavity closure, and chorioallantoic attachment. May be important for regulating trophoblast stem cell differentiation. The polypeptide is ETS domain-containing transcription factor ERF (ERF) (Homo sapiens (Human)).